Reading from the N-terminus, the 391-residue chain is ATP-sensitive inward rectifier potassium channel 1 (391 aa).

Residues 1-77 (MNASSRNVFD…IWTTVLDLKW (77 aa)) lie on the Cytoplasmic side of the membrane. A Phosphoserine; by SGK1 modification is found at serine 44. The chain crosses the membrane as a helical span at residues 78–102 (RYKMTIFITAFLGSWFFFGLLWYAV). The Extracellular segment spans residues 103–127 (AYIHKDLPEFHPSANHTPCVENING). N-linked (GlcNAc...) asparagine glycosylation is present at asparagine 117. Positions 128 to 139 (LTSAFLFSLETQ) form an intramembrane region, helical; Pore-forming. An intramembrane region (pore-forming) is located at residues 140 to 146 (VTIGYGF). A Selectivity filter motif is present at residues 141–146 (TIGYGF). Residues 147–155 (RCVTEQCAT) lie on the Extracellular side of the membrane. Residues 156 to 177 (AIFLLIFQSILGVIINSFMCGA) form a helical membrane-spanning segment. Residues 178 to 391 (ILAKISRPKK…EVNETDDTKM (214 aa)) are Cytoplasmic-facing. Positions 180–207 (AKISRPKKRAKTITFSKNAVISKRGGKL) are polyphosphoinositide (PIP2)-binding. 223–230 (GSHIYGKL) is an ATP binding site.

The protein belongs to the inward rectifier-type potassium channel (TC 1.A.2.1) family. KCNJ1 subfamily. In terms of assembly, interacts with SGK1 and SLC9A3R2/NHERF2. Post-translationally, phosphorylation at Ser-44 by SGK1 is necessary for its expression at the cell membrane. In terms of tissue distribution, in the kidney and pancreatic islets. Lower levels in skeletal muscle, pancreas, spleen, brain, heart and liver.

The protein localises to the cell membrane. The enzyme catalyses K(+)(in) = K(+)(out). Its activity is regulated as follows. Inhibited by WNK3. Activated by phosphatidylinositol 4,5 biphosphate (PtdIns(4,5)P2). In terms of biological role, inward rectifier potassium channels are characterized by a greater tendency to allow potassium to flow into the cell rather than out of it. Their voltage dependence is regulated by the concentration of extracellular potassium; as external potassium is raised, the voltage range of the channel opening shifts to more positive voltages. The inward rectification is mainly due to the blockage of outward current by internal magnesium. This channel is activated by internal ATP and can be blocked by external barium. In the kidney, probably plays a major role in potassium homeostasis. This Homo sapiens (Human) protein is ATP-sensitive inward rectifier potassium channel 1 (KCNJ1).